A 567-amino-acid chain; its full sequence is tRNA (uracil-O(2)-)-methyltransferase (567 aa).

Phosphoserine is present on Ser107.

Belongs to the TRM44 family.

The protein resides in the cytoplasm. The catalysed reaction is uridine(44) in tRNA(Ser) + S-adenosyl-L-methionine = 2'-O-methyluridine(44) in tRNA(Ser) + S-adenosyl-L-homocysteine + H(+). Its function is as follows. tRNA (uracil-O(2)-)-methyltransferase, which catalyzes the formation of O(2)-methyluracil at position 44 (Um44) in tRNA(Ser). The protein is tRNA (uracil-O(2)-)-methyltransferase (TRM44) of Saccharomyces cerevisiae (strain ATCC 204508 / S288c) (Baker's yeast).